The primary structure comprises 156 residues: MNLNATLIGQLIAFALFVAFCMKFVWPPLIKAIEERQANIANALASAEKAKQEQADSKAAADQEILKAKEEAQKIIDLATKRRNEILETVQAEAEIERQRIIEQGHAEVESERKRVQEELRQKVAALAVAGAEKIVGCSVDQAANNDIIDKLVAEL.

A helical membrane pass occupies residues 7–27 (LIGQLIAFALFVAFCMKFVWP).

Belongs to the ATPase B chain family. In terms of assembly, F-type ATPases have 2 components, F(1) - the catalytic core - and F(0) - the membrane proton channel. F(1) has five subunits: alpha(3), beta(3), gamma(1), delta(1), epsilon(1). F(0) has three main subunits: a(1), b(2) and c(10-14). The alpha and beta chains form an alternating ring which encloses part of the gamma chain. F(1) is attached to F(0) by a central stalk formed by the gamma and epsilon chains, while a peripheral stalk is formed by the delta and b chains.

The protein resides in the cell inner membrane. In terms of biological role, f(1)F(0) ATP synthase produces ATP from ADP in the presence of a proton or sodium gradient. F-type ATPases consist of two structural domains, F(1) containing the extramembraneous catalytic core and F(0) containing the membrane proton channel, linked together by a central stalk and a peripheral stalk. During catalysis, ATP synthesis in the catalytic domain of F(1) is coupled via a rotary mechanism of the central stalk subunits to proton translocation. Its function is as follows. Component of the F(0) channel, it forms part of the peripheral stalk, linking F(1) to F(0). The polypeptide is ATP synthase subunit b (Actinobacillus pleuropneumoniae serotype 5b (strain L20)).